Here is a 192-residue protein sequence, read N- to C-terminus: Casparian strip membrane protein 2 (192 aa).

Over 1 to 31 (MTKDVVVEHGESSKAPLVAAPAASGVGRAAS) the chain is Cytoplasmic. The chain crosses the membrane as a helical span at residues 32 to 52 (VADVFLRFLAIVGTIASAISM). The Extracellular segment spans residues 53-79 (GTTNETLPFFTQFIQFEAKYSDLPSFT). Residue Asn56 is glycosylated (N-linked (GlcNAc...) asparagine). The helical transmembrane segment at 80-100 (FFVAANAVVCTYLVLSIPLSI) threads the bilayer. The Cytoplasmic portion of the chain corresponds to 101–112 (VHIVRPRARYSR). Residues 113–133 (LVLVFFDAAMLTLLTAGASAA) traverse the membrane as a helical segment. Over 134–166 (AAIVYLAHKGNVRANWFAICQQFDSFCERISGS) the chain is Extracellular. The chain crosses the membrane as a helical span at residues 167-187 (LIGSFAAMVLLIMLIFLSAFA). At 188–192 (LARRH) the chain is on the cytoplasmic side.

Belongs to the Casparian strip membrane proteins (CASP) family. As to quaternary structure, homodimer and heterodimers.

It localises to the cell membrane. Regulates membrane-cell wall junctions and localized cell wall deposition. Required for establishment of the Casparian strip membrane domain (CSD) and the subsequent formation of Casparian strips, a cell wall modification of the root endodermis that determines an apoplastic barrier between the intraorganismal apoplasm and the extraorganismal apoplasm and prevents lateral diffusion. This Panicum virgatum (Blackwell switchgrass) protein is Casparian strip membrane protein 2.